Reading from the N-terminus, the 197-residue chain is MEVILLERVAKLGQMGEIVKVKDGFARNFLLKRKKALRATAENKAKYEGMKAELEANNIKAKGEAAKVAEKIDGRDIVIIRQASESGQLFGSVSVRDIVVALAADGITVSRPQVWLDAPIKAIGQQKITIAIHPEVETSVTVTVARSADEAERIKRGEDISTRQEDRDAAAEAIAAAGEFFDPEAQEDEAAAGETAQ.

The tract at residues 178–197 (GEFFDPEAQEDEAAAGETAQ) is disordered. Acidic residues predominate over residues 181–191 (FDPEAQEDEAA).

This sequence belongs to the bacterial ribosomal protein bL9 family.

Binds to the 23S rRNA. The polypeptide is Large ribosomal subunit protein bL9 (Bradyrhizobium sp. (strain BTAi1 / ATCC BAA-1182)).